A 145-amino-acid polypeptide reads, in one-letter code: MVKVPVVRVNEKAILPHYATFQAAGMDLAACLDEPVTLAPFSTALIPTGLAIELPPGYEAQLRPRSGLALKHMISLPNAPATIDADYRGEVMVILVNYGKTPFIVCHGDRIAQMVVARYEHVRLEEVKALSETDRGDGGFGHTGV.

Residues 65–67 (RSG), Asn-78, 82–84 (TID), and Met-92 each bind substrate.

This sequence belongs to the dUTPase family. It depends on Mg(2+) as a cofactor.

It catalyses the reaction dUTP + H2O = dUMP + diphosphate + H(+). It participates in pyrimidine metabolism; dUMP biosynthesis; dUMP from dCTP (dUTP route): step 2/2. In terms of biological role, this enzyme is involved in nucleotide metabolism: it produces dUMP, the immediate precursor of thymidine nucleotides and it decreases the intracellular concentration of dUTP so that uracil cannot be incorporated into DNA. The protein is Deoxyuridine 5'-triphosphate nucleotidohydrolase of Chlorobium phaeobacteroides (strain BS1).